Here is a 342-residue protein sequence, read N- to C-terminus: Mitogen-activated protein kinase kinase kinase 20 (342 aa).

A Protein kinase domain is found at 3-268; the sequence is WVRGETIGFG…AEMLLNHSFV (266 aa). ATP is bound at residue 9-17; the sequence is IGFGTFSTV. Ser-18 is modified (phosphoserine). At Thr-19 the chain carries Phosphothreonine. Lys-36 is a binding site for ATP. 2 positions are modified to phosphotyrosine: Tyr-41 and Tyr-66. Ser-93 and Ser-114 each carry phosphoserine. Catalysis depends on Asp-131, which acts as the Proton acceptor. The segment at 285–342 is required for MKK3 binding; it reads KDEDKVLMSPKCPFEFDDWDSFTLDSNPSFDSPVERLGSLVSGSIPDWSVGGSWLTVR.

It belongs to the protein kinase superfamily. Ser/Thr protein kinase family. Interacts with MKK3 and MPK18 via its C-terminal domain. Binds to MKK5. Autophosphorylates; active in phosphorylated state. Dephosphorylated by ABI1. In terms of tissue distribution, expressed in roots, seedlings, leaves, flower buds, flowers and siliques.

The protein resides in the nucleus. The protein localises to the cytoplasm. It carries out the reaction L-seryl-[protein] + ATP = O-phospho-L-seryl-[protein] + ADP + H(+). It catalyses the reaction L-threonyl-[protein] + ATP = O-phospho-L-threonyl-[protein] + ADP + H(+). Its activity is regulated as follows. Activated through serine, threonine and tyrosine phosphorylation, especially upon abscisic acid (ABA) treatment. Restricted activity by ABI1-mediated dephosphorylation. Functionally, mitogen-activated protein kinase kinase (MAPKK) that phosphorylates both MKK3 and MPK18 and regulate two separate signaling pathways involved in root microtubule functions. MAPKK which regulates abscisic acid (ABA) responses in a MAPKKK20-MKK5-MPK6 cascade involved in root growth (e.g. root cell division and elongation) and stomatal response, probably via MKK5 activation by protein phosphorylation and subsequent activation of MAPK6 by MKK5. Involved in various abiotic stresses (e.g. osmotic stress, cold and hydrogen peroxide) responses by phosphorylating and thus regulating MPK6 activity, in an ABA-independent manner. The polypeptide is Mitogen-activated protein kinase kinase kinase 20 (Arabidopsis thaliana (Mouse-ear cress)).